Consider the following 788-residue polypeptide: Endonuclease MutS2 (788 aa).

332–339 (GPNTGGKT) serves as a coordination point for ATP. The 76-residue stretch at 713-788 (VDLRGMDAEE…GTGVTVVELK (76 aa)) folds into the Smr domain.

This sequence belongs to the DNA mismatch repair MutS family. MutS2 subfamily. As to quaternary structure, homodimer. Binds to stalled ribosomes, contacting rRNA.

In terms of biological role, endonuclease that is involved in the suppression of homologous recombination and thus may have a key role in the control of bacterial genetic diversity. Functionally, acts as a ribosome collision sensor, splitting the ribosome into its 2 subunits. Detects stalled/collided 70S ribosomes which it binds and splits by an ATP-hydrolysis driven conformational change. Acts upstream of the ribosome quality control system (RQC), a ribosome-associated complex that mediates the extraction of incompletely synthesized nascent chains from stalled ribosomes and their subsequent degradation. Probably generates substrates for RQC. This is Endonuclease MutS2 from Clostridium botulinum (strain Langeland / NCTC 10281 / Type F).